The chain runs to 381 residues: Lipid-A-disaccharide synthase (381 aa).

This sequence belongs to the LpxB family.

The enzyme catalyses 2-N,3-O-bis[(3R)-3-hydroxytetradecanoyl]-alpha-D-glucosaminyl 1-phosphate + UDP-2-N,3-O-bis[(3R)-3-hydroxytetradecanoyl]-alpha-D-glucosamine = lipid A disaccharide (E. coli) + UDP + H(+). It catalyses the reaction a lipid X + a UDP-2-N,3-O-bis[(3R)-3-hydroxyacyl]-alpha-D-glucosamine = a lipid A disaccharide + UDP + H(+). It functions in the pathway glycolipid biosynthesis; lipid IV(A) biosynthesis; lipid IV(A) from (3R)-3-hydroxytetradecanoyl-[acyl-carrier-protein] and UDP-N-acetyl-alpha-D-glucosamine: step 5/6. Functionally, condensation of UDP-2,3-diacylglucosamine and 2,3-diacylglucosamine-1-phosphate to form lipid A disaccharide, a precursor of lipid A, a phosphorylated glycolipid that anchors the lipopolysaccharide to the outer membrane of the cell. In Erwinia tasmaniensis (strain DSM 17950 / CFBP 7177 / CIP 109463 / NCPPB 4357 / Et1/99), this protein is Lipid-A-disaccharide synthase.